Consider the following 859-residue polypeptide: Magnesium transporter ALR1 (859 aa).

Residues 1 to 20 (MSSSSSSSESSPNLSRSNSL) show a composition bias toward low complexity. Disordered regions lie at residues 1–281 (MSSS…MPPQ) and 330–399 (TSST…NIPS). An N-acetylserine modification is found at serine 2. Basic and acidic residues-rich tracts occupy residues 28-42 (KTEDHTGLYDHRQHP) and 55-73 (KNKEIAKSTKPSIPKEQKS). Tyrosine 77 is modified (phosphotyrosine). A Phosphoserine modification is found at serine 85. Residues 144–154 (PPKDVGVKRDY) are compositionally biased toward basic and acidic residues. Residues 157–176 (SSSTASSGNKSKLSASSSAS) show a composition bias toward low complexity. Phosphoserine is present on residues serine 185 and serine 188. The segment covering 193–203 (IPHESKSDTHS) has biased composition (basic and acidic residues). Positions 213-235 (YSTTSAHSSINPAVLLTKSTSQK) are enriched in polar residues. A phosphoserine mark is found at serine 220, serine 221, and serine 236. Position 242 is a phosphothreonine (threonine 242). Over residues 252 to 265 (TRASFDSDVSQASR) the composition is skewed to polar residues. Low complexity predominate over residues 330–339 (TSSTSTSGSS). The segment covering 353–375 (EKSESTNETEIHEKKEDEHEKIK) has biased composition (basic and acidic residues). A run of 2 helical transmembrane segments spans residues 744–764 (TMIGTMLVPLNVITGLFGMNV) and 773–793 (IAWWFGILGVLLLLAVLGWFL). The segment at 830-859 (FNDRSKNINVRAGPSNKSVASLPSRYSRYD) is disordered. Residue serine 850 is modified to Phosphoserine.

Belongs to the CorA metal ion transporter (MIT) (TC 1.A.35) family.

Its subcellular location is the cell membrane. In terms of biological role, plasma membrane magnesium transporter. This Saccharomyces cerevisiae (strain ATCC 204508 / S288c) (Baker's yeast) protein is Magnesium transporter ALR1 (ALR1).